The primary structure comprises 2601 residues: Centrosomal protein of 295 kDa (2601 aa).

Residues 1 to 560 (MKRKVVNTHK…KKTQPTGVGI (560 aa)) form a necessary for centriole targeting and microtubule association region. At Ser-14 the chain carries Phosphoserine. Coiled coils occupy residues 207–273 (KRPD…EDLA) and 500–552 (AARI…KRKK). Ser-654 and Ser-938 each carry phosphoserine. Residues 1008–1029 (PSADTKSGKIQEQHSSKSEKGL) are disordered. Residues 1013–1027 (KSGKIQEQHSSKSEK) show a composition bias toward basic and acidic residues. Coiled-coil stretches lie at residues 1053–1082 (LHDS…VELL) and 1498–1544 (IQSH…VSSE). The disordered stretch occupies residues 1558–1580 (ADSERTQKSFPTKSNDTLPSSHR). Positions 1565 to 1577 (KSFPTKSNDTLPS) are enriched in polar residues. Residue Ser-1637 is modified to Phosphoserine. The stretch at 1728 to 1758 (QEKLLVQRQTALQQQIQKHEETLKDFFKDSQ) forms a coiled coil. Composition is skewed to basic and acidic residues over residues 1795 to 1827 (RHAD…DLGR), 1985 to 2003 (FSEH…KEEE), and 2100 to 2112 (DNRD…DSSS). 3 disordered regions span residues 1795-1834 (RHAD…KPPV), 1979-2004 (LTDP…EEET), and 2085-2117 (HPDF…SHCA). Residue Thr-2473 is modified to Phosphothreonine. Residues 2478–2601 (SLQEAFIKRK…LEKLRAKNTC (124 aa)) are ALMS motif. Positions 2556-2581 (RLYNQLAEVKQQKEEKTKQEAYAQNR) form a coiled coil.

In terms of assembly, interacts (via ALMS motif) with microtubules; this interaction is direct.

Its subcellular location is the cytoplasm. The protein localises to the cytoskeleton. It localises to the microtubule organizing center. It is found in the centrosome. The protein resides in the centriole. Its subcellular location is the spindle. Its function is as follows. Centriole-enriched microtubule-binding protein involved in centriole biogenesis. Essential for the generation of the distal portion of new-born centrioles in a CPAP- and CEP120-mediated elongation dependent manner during the cell cycle S/G2 phase after formation of the initiating cartwheel structure. Required for the recruitment of centriolar proteins, such as POC1B, POC5 and CEP135, into the distal portion of centrioles. Also required for centriole-to-centrosome conversion during mitotic progression, but is dispensable for cartwheel removal or centriole disengagement. Binds to and stabilizes centriolar microtubule. May be involved in ciliogenesis. In Homo sapiens (Human), this protein is Centrosomal protein of 295 kDa.